The sequence spans 338 residues: Glycerol-3-phosphate dehydrogenase [NAD(P)+] (338 aa).

NADPH is bound by residues Ser-18, Tyr-19, His-39, and Lys-113. Residues Lys-113, Gly-142, and Thr-144 each contribute to the sn-glycerol 3-phosphate site. Residue Ala-146 participates in NADPH binding. Residues Lys-198, Asp-251, Ser-261, Arg-262, and Asn-263 each contribute to the sn-glycerol 3-phosphate site. Lys-198 (proton acceptor) is an active-site residue. Position 262 (Arg-262) interacts with NADPH. 2 residues coordinate NADPH: Val-286 and Glu-288.

Belongs to the NAD-dependent glycerol-3-phosphate dehydrogenase family.

Its subcellular location is the cytoplasm. The catalysed reaction is sn-glycerol 3-phosphate + NAD(+) = dihydroxyacetone phosphate + NADH + H(+). The enzyme catalyses sn-glycerol 3-phosphate + NADP(+) = dihydroxyacetone phosphate + NADPH + H(+). The protein operates within membrane lipid metabolism; glycerophospholipid metabolism. Functionally, catalyzes the reduction of the glycolytic intermediate dihydroxyacetone phosphate (DHAP) to sn-glycerol 3-phosphate (G3P), the key precursor for phospholipid synthesis. This chain is Glycerol-3-phosphate dehydrogenase [NAD(P)+], found in Photobacterium profundum (strain SS9).